A 359-amino-acid chain; its full sequence is 4-galactosyl-N-acetylglucosaminide 3-alpha-L-fucosyltransferase 9 (359 aa).

The Cytoplasmic portion of the chain corresponds to 1 to 11 (MTSASKGILRP). A helical; Signal-anchor for type II membrane protein transmembrane segment spans residues 12 to 32 (FLIVCIILACSMVCLFIYIKP). Residues 33–359 (TNSWIFSPME…VGNLEKWFWN (327 aa)) lie on the Lumenal side of the membrane. N-linked (GlcNAc...) asparagine glycosylation is present at asparagine 62. The segment at 63 to 168 (ETTILIWVWP…RRDSDIQVPY (106 aa)) is acceptor-binding. An a beta-D-galactosyl-(1-&gt;4)-N-acetyl-beta-D-glucosaminyl derivative-binding site is contributed by glutamine 75. 3 disulfides stabilise this stretch: cysteine 82/cysteine 335, cysteine 91/cysteine 338, and cysteine 190/cysteine 238. Asparagine 101 is a glycosylation site (N-linked (GlcNAc...) asparagine). Residue glutamate 137 coordinates a beta-D-galactosyl-(1-&gt;4)-N-acetyl-beta-D-glucosaminyl derivative. The active-site Nucleophile is the glutamate 137. A GDP-beta-L-fucose-binding site is contributed by glutamate 137. A glycan (N-linked (GlcNAc...) asparagine) is linked at asparagine 153. GDP-beta-L-fucose-binding residues include tyrosine 168, valine 192, serine 194, asparagine 195, arginine 202, valine 226, tyrosine 241, asparagine 246, tyrosine 252, glutamate 255, and lysine 256. Residues 169-326 (GFLTVSTNPF…NWRKDFTVNL (158 aa)) form a donor-binding region. Residues 327 to 359 (PRFWESHACLACDHVKRHQEYKSVGNLEKWFWN) are acceptor-binding.

This sequence belongs to the glycosyltransferase 10 family. As to quaternary structure, homodimer. N-glycosylated with complex-type N-glycans.

The protein localises to the golgi apparatus. It is found in the trans-Golgi network membrane. It localises to the golgi apparatus membrane. It catalyses the reaction a beta-D-galactosyl-(1-&gt;4)-N-acetyl-beta-D-glucosaminyl derivative + GDP-beta-L-fucose = a beta-D-galactosyl-(1-&gt;4)-[alpha-L-fucosyl-(1-&gt;3)]-N-acetyl-beta-D-glucosaminyl derivative + GDP + H(+). The catalysed reaction is an alpha-Neu5Ac-(2-&gt;3)-beta-D-Gal-(1-&gt;4)-beta-D-GlcNAc-(1-&gt;3)-beta-D-Gal-(1-&gt;4)-beta-D-GlcNAc derivative + GDP-beta-L-fucose = an alpha-Neu5Ac-(2-&gt;3)-beta-D-Gal-(1-&gt;4)-beta-D-GlcNAc-(1-&gt;3)-beta-D-Gal-(1-&gt;4)-[alpha-L-Fuc-(1-&gt;3)]-beta-D-GlcNAc derivative + GDP + H(+). It carries out the reaction alpha-N-glycoloylneuraminosyl-(2-&gt;3)-beta-D-galactosyl-(1-&gt;4)-N-acetyl-beta-D-glucosaminyl-(1-&gt;3)-beta-D-galactosyl-(1-&gt;4)-N-acetyl-beta-D-glucosaminyl-(1-&gt;3)-beta-D-galactosyl-(1-&gt;4)-beta-D-glucosyl-(1&lt;-&gt;1')-ceramide + GDP-beta-L-fucose = alpha-N-glycoloylneuraminosyl-(2-&gt;3)-beta-D-galactosyl-(1-&gt;4)-N-acetyl-beta-D-glucosaminyl-(1-&gt;3)-beta-D-galactosyl-(1-&gt;4)-[alpha-L-fucosyl-(1-&gt;3)]-N-acetyl-beta-D-glucosaminyl-(1-&gt;3)-beta-D-galactosyl-(1-&gt;4)-beta-D-glucosyl-(1&lt;-&gt;1')-ceramide + GDP + H(+). The enzyme catalyses alpha-D-galactosyl-(1-&gt;3)-beta-D-galactosyl-(1-&gt;4)-N-acetyl-beta-D-glucosaminyl-(1-&gt;3)-beta-D-galactosyl-(1-&gt;4)-beta-D-glucosyl-(1&lt;-&gt;1')-ceramide + GDP-beta-L-fucose = a neolactoside IV(3)-alpha-Gal,III(3)-alpha-Fuc-nLc4Cer + GDP + H(+). It catalyses the reaction a neolactoside nLc4Cer + GDP-beta-L-fucose = a neolactoside III(3)-alpha-Fuc-nLc4Cer + GDP + H(+). The catalysed reaction is an N-acetyl-alpha-neuraminyl-(2-&gt;3)-beta-D-galactosyl-(1-&gt;4)-N-acetyl-beta-D-glucosaminyl derivative + GDP-beta-L-fucose = an alpha-Neu5Ac-(2-&gt;3)-beta-D-Gal-(1-&gt;4)-[alpha-L-Fuc-(1-&gt;3)]-beta-D-GlcNAc derivative + GDP + H(+). It carries out the reaction beta-D-Gal-(1-&gt;4)-beta-D-GlcNAc-(1-&gt;3)-beta-D-Gal-(1-&gt;4)-D-Glc + GDP-beta-L-fucose = beta-D-Gal-(1-&gt;4)-[alpha-L-Fuc-(1-&gt;3)]-beta-D-GlcNAc-(1-&gt;3)-beta-D-Gal-(1-&gt;4)-D-Glc + GDP + H(+). The enzyme catalyses an alpha-L-Fuc-(1-&gt;2)-beta-D-Gal-(1-&gt;4)-beta-D-GlcNAc derivative + GDP-beta-L-fucose = an alpha-L-Fuc-(1-&gt;2)-beta-D-Gal-(1-&gt;4)-[alpha-L-Fuc-(1-&gt;3)]-beta-D-GlcNAc derivative + GDP + H(+). It functions in the pathway protein modification; protein glycosylation. The protein operates within glycolipid biosynthesis. Its activity is regulated as follows. Activated by Mn2+. Catalyzes alpha(1-&gt;3) linkage of fucosyl moiety transferred from GDP-beta-L-fucose to N-acetyl glucosamine (GlcNAc) within type 2 lactosamine (LacNAc, beta-D-Gal-(1-&gt;4)-beta-D-GlcNAc-) glycan attached to glycolipids and N- or O-linked glycoproteins. Fucosylates distal type 2 LacNAc and its fucosylated (H-type 2 LacNAc) and sialylated (sialyl-type 2 LacNAc) derivatives to form Lewis x (Lex) (CD15) and Lewis y (Ley) antigenic epitopes involved in cell adhesion and differentiation. Generates Lex epitopes in the brain, presumably playing a role in the maintenance of neuronal stemness and neurite outgrowth in progenitor neural cells. Fucosylates the internal type 2 LacNAc unit of the polylactosamine chain to form VIM-2 antigen that serves as recognition epitope for SELE. Can also modify milk oligosaccharides in particular type 2 tetrasaccharide LNnT. This Bos taurus (Bovine) protein is 4-galactosyl-N-acetylglucosaminide 3-alpha-L-fucosyltransferase 9.